The sequence spans 398 residues: 4-hydroxy-3-methylbut-2-enyl diphosphate reductase (398 aa).

Cys-66 contributes to the [4Fe-4S] cluster binding site. His-96 is a (2E)-4-hydroxy-3-methylbut-2-enyl diphosphate binding site. His-96 lines the dimethylallyl diphosphate pocket. His-96 lines the isopentenyl diphosphate pocket. [4Fe-4S] cluster is bound at residue Cys-157. His-185 contacts (2E)-4-hydroxy-3-methylbut-2-enyl diphosphate. His-185 is a binding site for dimethylallyl diphosphate. His-185 is an isopentenyl diphosphate binding site. Glu-187 acts as the Proton donor in catalysis. Position 250 (Thr-250) interacts with (2E)-4-hydroxy-3-methylbut-2-enyl diphosphate. Cys-288 contacts [4Fe-4S] cluster. (2E)-4-hydroxy-3-methylbut-2-enyl diphosphate is bound by residues Ser-317, Ser-318, Asn-319, and Ser-380. Residues Ser-317, Ser-318, Asn-319, and Ser-380 each contribute to the dimethylallyl diphosphate site. 4 residues coordinate isopentenyl diphosphate: Ser-317, Ser-318, Asn-319, and Ser-380.

The protein belongs to the IspH family. Requires [4Fe-4S] cluster as cofactor.

It catalyses the reaction isopentenyl diphosphate + 2 oxidized [2Fe-2S]-[ferredoxin] + H2O = (2E)-4-hydroxy-3-methylbut-2-enyl diphosphate + 2 reduced [2Fe-2S]-[ferredoxin] + 2 H(+). The catalysed reaction is dimethylallyl diphosphate + 2 oxidized [2Fe-2S]-[ferredoxin] + H2O = (2E)-4-hydroxy-3-methylbut-2-enyl diphosphate + 2 reduced [2Fe-2S]-[ferredoxin] + 2 H(+). Its pathway is isoprenoid biosynthesis; dimethylallyl diphosphate biosynthesis; dimethylallyl diphosphate from (2E)-4-hydroxy-3-methylbutenyl diphosphate: step 1/1. It functions in the pathway isoprenoid biosynthesis; isopentenyl diphosphate biosynthesis via DXP pathway; isopentenyl diphosphate from 1-deoxy-D-xylulose 5-phosphate: step 6/6. In terms of biological role, catalyzes the conversion of 1-hydroxy-2-methyl-2-(E)-butenyl 4-diphosphate (HMBPP) into a mixture of isopentenyl diphosphate (IPP) and dimethylallyl diphosphate (DMAPP). Acts in the terminal step of the DOXP/MEP pathway for isoprenoid precursor biosynthesis. The polypeptide is 4-hydroxy-3-methylbut-2-enyl diphosphate reductase (Prochlorococcus marinus subsp. pastoris (strain CCMP1986 / NIES-2087 / MED4)).